A 228-amino-acid polypeptide reads, in one-letter code: 7-cyano-7-deazaguanine synthase (228 aa).

9–19 serves as a coordination point for ATP; that stretch reads LSGGPDSTTVL. Residues cysteine 193, cysteine 203, cysteine 206, and cysteine 209 each coordinate Zn(2+).

Belongs to the QueC family. Zn(2+) serves as cofactor.

The catalysed reaction is 7-carboxy-7-deazaguanine + NH4(+) + ATP = 7-cyano-7-deazaguanine + ADP + phosphate + H2O + H(+). It participates in purine metabolism; 7-cyano-7-deazaguanine biosynthesis. Catalyzes the ATP-dependent conversion of 7-carboxy-7-deazaguanine (CDG) to 7-cyano-7-deazaguanine (preQ(0)). This is 7-cyano-7-deazaguanine synthase from Rickettsia massiliae (strain Mtu5).